A 352-amino-acid chain; its full sequence is Putative [LysW]-L-2-aminoadipate 6-phosphate reductase (352 aa).

Residue 11-14 (SGYT) coordinates NADP(+). Cys148 is an active-site residue. Asn319 contacts NADP(+).

The protein belongs to the NAGSA dehydrogenase family. Type 1 subfamily. LysY sub-subfamily.

The protein localises to the cytoplasm. It catalyses the reaction [amino-group carrier protein]-C-terminal-N-(1-carboxy-5-oxopentan-1-yl)-L-glutamine + phosphate + NADP(+) = [amino-group carrier protein]-C-terminal-N-(1-carboxy-5-phosphooxy-5-oxopentan-1-yl)-L-glutamine + NADPH + H(+). The protein operates within amino-acid biosynthesis; L-lysine biosynthesis via AAA pathway; L-lysine from L-alpha-aminoadipate (Thermus route): step 3/5. Functionally, catalyzes the NADPH-dependent reduction of [LysW]-aminoadipate 6-phosphate to yield [LysW]-aminoadipate 6-semialdehyde. In Thermomicrobium roseum (strain ATCC 27502 / DSM 5159 / P-2), this protein is Putative [LysW]-L-2-aminoadipate 6-phosphate reductase.